The chain runs to 170 residues: Peptide deformylase (170 aa).

Residues cysteine 91 and histidine 133 each contribute to the Fe cation site. Residue glutamate 134 is part of the active site. Histidine 137 is a Fe cation binding site.

This sequence belongs to the polypeptide deformylase family. Fe(2+) serves as cofactor.

The catalysed reaction is N-terminal N-formyl-L-methionyl-[peptide] + H2O = N-terminal L-methionyl-[peptide] + formate. In terms of biological role, removes the formyl group from the N-terminal Met of newly synthesized proteins. Requires at least a dipeptide for an efficient rate of reaction. N-terminal L-methionine is a prerequisite for activity but the enzyme has broad specificity at other positions. The polypeptide is Peptide deformylase (Glaesserella parasuis serovar 5 (strain SH0165) (Haemophilus parasuis)).